The primary structure comprises 380 residues: Cytochrome b (380 aa).

The next 4 membrane-spanning stretches (helical) occupy residues 34-54, 78-99, 114-134, and 179-199; these read FGSL…LLAM, WLIR…YLHI, WNTG…GYVL, and FFAL…IHLT. Heme b-binding residues include His84 and His98. Heme b is bound by residues His183 and His197. His202 serves as a coordination point for a ubiquinone. Helical transmembrane passes span 227–247, 289–309, 321–341, and 348–368; these read LKDI…ALFS, LGGV…PLLH, LSQL…WIGS, and FIII…ILFP.

It belongs to the cytochrome b family. In terms of assembly, the cytochrome bc1 complex contains 11 subunits: 3 respiratory subunits (MT-CYB, CYC1 and UQCRFS1), 2 core proteins (UQCRC1 and UQCRC2) and 6 low-molecular weight proteins (UQCRH/QCR6, UQCRB/QCR7, UQCRQ/QCR8, UQCR10/QCR9, UQCR11/QCR10 and a cleavage product of UQCRFS1). This cytochrome bc1 complex then forms a dimer. Requires heme b as cofactor.

The protein resides in the mitochondrion inner membrane. Its function is as follows. Component of the ubiquinol-cytochrome c reductase complex (complex III or cytochrome b-c1 complex) that is part of the mitochondrial respiratory chain. The b-c1 complex mediates electron transfer from ubiquinol to cytochrome c. Contributes to the generation of a proton gradient across the mitochondrial membrane that is then used for ATP synthesis. The chain is Cytochrome b (MT-CYB) from Oceanodroma microsoma (Least storm petrel).